A 335-amino-acid chain; its full sequence is Nucleoid-associated protein PputW619_4243 (335 aa).

This sequence belongs to the YejK family.

It localises to the cytoplasm. The protein localises to the nucleoid. The sequence is that of Nucleoid-associated protein PputW619_4243 from Pseudomonas putida (strain W619).